Here is a 582-residue protein sequence, read N- to C-terminus: Aspartate--tRNA ligase (582 aa).

Positions 198–201 are aspartate; sequence QIFK. R220 contacts L-aspartate. Residues 220-222 and Q229 contribute to the ATP site; that span reads RDE. H445 provides a ligand contact to L-aspartate. E479 serves as a coordination point for ATP. R486 serves as a coordination point for L-aspartate. 531 to 534 serves as a coordination point for ATP; the sequence is GFDR.

This sequence belongs to the class-II aminoacyl-tRNA synthetase family. Type 1 subfamily. Homodimer.

The protein localises to the cytoplasm. It catalyses the reaction tRNA(Asp) + L-aspartate + ATP = L-aspartyl-tRNA(Asp) + AMP + diphosphate. Its function is as follows. Catalyzes the attachment of L-aspartate to tRNA(Asp) in a two-step reaction: L-aspartate is first activated by ATP to form Asp-AMP and then transferred to the acceptor end of tRNA(Asp). This Amoebophilus asiaticus (strain 5a2) protein is Aspartate--tRNA ligase.